The primary structure comprises 67 residues: UPF0337 protein msl9551 (67 aa).

Belongs to the UPF0337 (CsbD) family.

The protein is UPF0337 protein msl9551 of Mesorhizobium japonicum (strain LMG 29417 / CECT 9101 / MAFF 303099) (Mesorhizobium loti (strain MAFF 303099)).